Consider the following 474-residue polypeptide: 3-isopropylmalate dehydratase large subunit (474 aa).

The [4Fe-4S] cluster site is built by Cys353, Cys414, and Cys417.

Belongs to the aconitase/IPM isomerase family. LeuC type 1 subfamily. In terms of assembly, heterodimer of LeuC and LeuD. [4Fe-4S] cluster is required as a cofactor.

It catalyses the reaction (2R,3S)-3-isopropylmalate = (2S)-2-isopropylmalate. Its pathway is amino-acid biosynthesis; L-leucine biosynthesis; L-leucine from 3-methyl-2-oxobutanoate: step 2/4. Catalyzes the isomerization between 2-isopropylmalate and 3-isopropylmalate, via the formation of 2-isopropylmaleate. The chain is 3-isopropylmalate dehydratase large subunit from Xylella fastidiosa (strain M23).